The sequence spans 1427 residues: A disintegrin and metalloproteinase with thrombospondin motifs 13 (1427 aa).

An N-terminal signal peptide occupies residues 1-29 (MHQRHPRARCPPLCVAGILACGFLLGCWG). The propeptide occupies 30–74 (PSHFQQSCLQALEPQAVSSYLSPGAPLKGRPPSPGFQRQRQRQRR). The interval 51–70 (SPGAPLKGRPPSPGFQRQRQ) is disordered. A Peptidase M12B domain is found at 80-286 (LHLELLVAVG…GRARCVWDPP (207 aa)). E83 is a binding site for Ca(2+). N142 and N146 each carry an N-linked (GlcNAc...) asparagine glycan. Cystine bridges form between C155–C208, C202–C281, and C242–C265. Residues D173, D182, E184, D187, and E212 each coordinate Ca(2+). H224 is a Zn(2+) binding site. E225 is an active-site residue. Residues H228 and H234 each coordinate Zn(2+). C281 and D284 together coordinate Ca(2+). The Disintegrin domain maps to 287–383 (RPQPGSAGHP…LVELTPIAAV (97 aa)). Cystine bridges form between C311–C337, C322–C347, C332–C366, and C360–C371. Residues 384–439 (HGRWSSWGPRSPCSRSCGGGVVTRRRQCNNPRPAFGGRACVGADLQAEMCNTQACE) form the TSP type-1 1 domain. W387 carries C-linked (Man) tryptophan glycosylation. Cystine bridges form between C396-C433, C400-C438, C411-C423, C450-C487, C483-C522, C508-C527, C532-C548, and C545-C555. S399 is a glycosylation site (O-linked (Fuc...) serine). The cysteine-rich stretch occupies residues 440–556 (KTQLEFMSQQ…VCGGDNSTCS (117 aa)). Positions 498-500 (RGD) match the Cell attachment site motif. Residues N552, N579, and N614 are each glycosylated (N-linked (GlcNAc...) asparagine). Positions 556–685 (SPRKGSFTAG…TYFQPKPRQA (130 aa)) are spacer. N-linked (GlcNAc...) (complex) asparagine glycosylation is present at N667. 7 TSP type-1 domains span residues 682–730 (PRQA…SQQP), 742–805 (CPPY…QPCP), 808–859 (WEVS…PEPC), 896–950 (VWTP…QAVP), 951–1011 (CPAR…SLEP), 1012–1068 (CPPR…VPCL), and 1072–1131 (CTYR…GPCV). O-linked (Fuc...) serine glycosylation occurs at S698. The N-linked (GlcNAc...) (complex) asparagine glycan is linked to N707. S757 carries an O-linked (Fuc...) serine glycan. The N-linked (GlcNAc...) asparagine glycan is linked to N828. 4 O-linked (Fuc...) serine glycosylation sites follow: S907, S965, S1027, and S1087. CUB domains follow at residues 1192 to 1298 (CGRQ…FYRE) and 1299 to 1427 (CDMQ…KEGT). N-linked (GlcNAc...) asparagine glycosylation is found at N1235 and N1354.

Zn(2+) is required as a cofactor. The cofactor is Ca(2+). Post-translationally, glycosylated. O-fucosylated by POFUT2 on a serine or a threonine residue found within the consensus sequence C1-X(2)-(S/T)-C2-G of the TSP type-1 repeat domains where C1 and C2 are the first and second cysteine residue of the repeat, respectively. Fucosylated repeats can then be further glycosylated by the addition of a beta-1,3-glucose residue by the glucosyltransferase, B3GALTL. Fucosylation mediates the efficient secretion of ADAMTS13. May also be C-glycosylated on tryptophan residues within the consensus sequence W-X-X-W of the TPRs, and also N-glycosylated. These other glycosylations can also facilitate secretion. In terms of processing, the precursor is processed by a furin endopeptidase which cleaves off the pro-domain. Plasma. Expressed primarily in liver.

The protein localises to the secreted. It catalyses the reaction The enzyme cleaves the von Willebrand factor at bond 842-Tyr-|-Met-843 within the A2 domain.. With respect to regulation, zinc and calcium ions cooperatively modulate enzyme activity. The cleavage of the pro-domain is not required for protease activity. Dependence on calcium for proteolytic activity is mediated by the high affinity site. Functionally, cleaves the vWF multimers in plasma into smaller forms thereby controlling vWF-mediated platelet thrombus formation. The polypeptide is A disintegrin and metalloproteinase with thrombospondin motifs 13 (ADAMTS13) (Homo sapiens (Human)).